The following is a 238-amino-acid chain: Orotidine 5'-phosphate decarboxylase (238 aa).

Residues Asp-10, Lys-32, 59-68 (DLKLHDIPNT), Thr-122, Arg-184, Gln-193, Gly-213, and Arg-214 contribute to the substrate site. Lys-61 acts as the Proton donor in catalysis.

The protein belongs to the OMP decarboxylase family. Type 1 subfamily. As to quaternary structure, homodimer.

It catalyses the reaction orotidine 5'-phosphate + H(+) = UMP + CO2. It participates in pyrimidine metabolism; UMP biosynthesis via de novo pathway; UMP from orotate: step 2/2. Catalyzes the decarboxylation of orotidine 5'-monophosphate (OMP) to uridine 5'-monophosphate (UMP). The chain is Orotidine 5'-phosphate decarboxylase from Bacillus anthracis (strain A0248).